A 206-amino-acid chain; its full sequence is Large ribosomal subunit protein mL40 (206 aa).

A mitochondrion-targeting transit peptide spans 1–46 (MATAAMLCAARALRPRSWIPGTCQAQVRHTHQRASLLSFWELIPMR). The tract at residues 170 to 190 (PFEKEGPHYTPPVPNYQAPEG) is disordered.

It belongs to the mitochondrion-specific ribosomal protein mL40 family. Component of the mitochondrial ribosome large subunit (39S) which comprises a 16S rRNA and about 50 distinct proteins.

The protein resides in the mitochondrion. This Rattus norvegicus (Rat) protein is Large ribosomal subunit protein mL40 (Mrpl40).